A 531-amino-acid chain; its full sequence is Apolipoprotein N-acyltransferase (531 aa).

7 helical membrane-spanning segments follow: residues 8–28 (IILL…LLAV), 34–54 (FGIF…IDGV), 69–89 (PAAI…WWLG), 105–125 (LAVV…VVIA), 136–156 (IAAL…VFTG), 178–198 (VVNL…PALI), and 207–227 (GLAI…YRLA). The region spanning 243–493 (VQPVIDQAKK…RGVLDTILPG (251 aa)) is the CN hydrolase domain. Glu287 acts as the Proton acceptor in catalysis. Residue Lys351 is part of the active site. Cys405 serves as the catalytic Nucleophile. Residues 507–527 (IFWLSMAILSIVASFSRFGFN) traverse the membrane as a helical segment.

This sequence belongs to the CN hydrolase family. Apolipoprotein N-acyltransferase subfamily.

Its subcellular location is the cell inner membrane. It carries out the reaction N-terminal S-1,2-diacyl-sn-glyceryl-L-cysteinyl-[lipoprotein] + a glycerophospholipid = N-acyl-S-1,2-diacyl-sn-glyceryl-L-cysteinyl-[lipoprotein] + a 2-acyl-sn-glycero-3-phospholipid + H(+). Its pathway is protein modification; lipoprotein biosynthesis (N-acyl transfer). In terms of biological role, catalyzes the phospholipid dependent N-acylation of the N-terminal cysteine of apolipoprotein, the last step in lipoprotein maturation. This chain is Apolipoprotein N-acyltransferase, found in Sinorhizobium medicae (strain WSM419) (Ensifer medicae).